Consider the following 374-residue polypeptide: N-acetyldiaminopimelate deacetylase (374 aa).

Asp-69 is a catalytic residue. Glu-128 (proton acceptor) is an active-site residue.

It belongs to the peptidase M20A family. N-acetyldiaminopimelate deacetylase subfamily.

The catalysed reaction is N-acetyl-(2S,6S)-2,6-diaminopimelate + H2O = (2S,6S)-2,6-diaminopimelate + acetate. It participates in amino-acid biosynthesis; L-lysine biosynthesis via DAP pathway; LL-2,6-diaminopimelate from (S)-tetrahydrodipicolinate (acetylase route): step 3/3. In terms of biological role, catalyzes the conversion of N-acetyl-diaminopimelate to diaminopimelate and acetate. This chain is N-acetyldiaminopimelate deacetylase, found in Bacillus velezensis (strain DSM 23117 / BGSC 10A6 / LMG 26770 / FZB42) (Bacillus amyloliquefaciens subsp. plantarum).